The following is a 251-amino-acid chain: Hydroxyacylglutathione hydrolase (251 aa).

Zn(2+)-binding residues include histidine 53, histidine 55, aspartate 57, histidine 58, histidine 110, aspartate 127, and histidine 165.

This sequence belongs to the metallo-beta-lactamase superfamily. Glyoxalase II family. Monomer. Zn(2+) is required as a cofactor.

It carries out the reaction an S-(2-hydroxyacyl)glutathione + H2O = a 2-hydroxy carboxylate + glutathione + H(+). The protein operates within secondary metabolite metabolism; methylglyoxal degradation; (R)-lactate from methylglyoxal: step 2/2. Thiolesterase that catalyzes the hydrolysis of S-D-lactoyl-glutathione to form glutathione and D-lactic acid. The polypeptide is Hydroxyacylglutathione hydrolase (Escherichia coli O81 (strain ED1a)).